Here is a 155-residue protein sequence, read N- to C-terminus: Large ribosomal subunit protein bL9c (155 aa).

It belongs to the bacterial ribosomal protein bL9 family.

The protein localises to the plastid. It localises to the chloroplast. Its function is as follows. Binds to the 23S rRNA. In Pyropia yezoensis (Susabi-nori), this protein is Large ribosomal subunit protein bL9c.